The following is a 231-amino-acid chain: Orotidine 5'-phosphate decarboxylase (231 aa).

Substrate-binding positions include D11, K33, 60 to 69 (DLKFHDIPNT), T117, R178, Q187, G207, and R208. The active-site Proton donor is the K62.

The protein belongs to the OMP decarboxylase family. Type 1 subfamily. As to quaternary structure, homodimer.

The catalysed reaction is orotidine 5'-phosphate + H(+) = UMP + CO2. Its pathway is pyrimidine metabolism; UMP biosynthesis via de novo pathway; UMP from orotate: step 2/2. Catalyzes the decarboxylation of orotidine 5'-monophosphate (OMP) to uridine 5'-monophosphate (UMP). This Nitrosomonas eutropha (strain DSM 101675 / C91 / Nm57) protein is Orotidine 5'-phosphate decarboxylase.